The chain runs to 2345 residues: Acetyl-CoA carboxylase 1 (2345 aa).

Position 1 is an N-acetylmethionine (Met-1). Phosphoserine occurs at positions 5, 23, 25, 29, 34, 47, 49, and 52. Thr-57 carries the phosphothreonine modification. 2 positions are modified to phosphoserine: Ser-77 and Ser-79. Ser-79 is subject to Phosphoserine; by AMPK. One can recognise a Biotin carboxylation domain in the interval 116-617; it reads VIEKVLIANN…DTGWLDRLIA (502 aa). Residues 274 to 465 enclose the ATP-grasp domain; it reads SKRILNVPQD…LPAAQLQIAM (192 aa). An ATP-binding site is contributed by 300–357; that stretch reads AEEVGYPVMIKASEGGGGKGIRKVNNADDFPNLFRQVQAEVPGSPIFVMRLAKQSRHL. Positions 423, 436, and 438 each coordinate Mg(2+). Positions 423, 436, and 438 each coordinate Mn(2+). Arg-440 is a catalytic residue. Thr-609 carries the post-translational modification Phosphothreonine. A Biotinyl-binding domain is found at 744-818; the sequence is FEKENDPSVM…DPGCVIAKMQ (75 aa). Lys-785 carries the post-translational modification N6-biotinyllysine. 4 positions are modified to phosphoserine: Ser-834, Ser-1200, Ser-1215, and Ser-1217. Phosphothreonine is present on Thr-1226. 3 positions are modified to phosphoserine: Ser-1258, Ser-1262, and Ser-1272. Lys-1333 carries the post-translational modification N6-acetyllysine. The region spanning 1575-1913 is the CoA carboxyltransferase N-terminal domain; that stretch reads PYVTKDLLQS…SVHSSVPLLN (339 aa). A carboxyltransferase region spans residues 1575 to 2233; the sequence is PYVTKDLLQS…EDLVKKKIHN (659 aa). CoA contacts are provided by Arg-1822, Lys-2126, and Arg-2128. The 317-residue stretch at 1917–2233 folds into the CoA carboxyltransferase C-terminal domain; sequence PIDRIIEFVP…EDLVKKKIHN (317 aa). Thr-2152 is modified (phosphothreonine).

As to quaternary structure, monomer, homodimer, and homotetramer. Can form filamentous polymers. Interacts in its inactive phosphorylated form with the BRCT domains of BRCA1 which prevents ACACA dephosphorylation and inhibits lipid synthesis. Interacts with MID1IP1; interaction with MID1IP1 promotes oligomerization and increases its activity. Mg(2+) serves as cofactor. Mn(2+) is required as a cofactor. It depends on biotin as a cofactor. In terms of processing, phosphorylation on Ser-1262 is required for interaction with BRCA1. Post-translationally, phosphorylation at Ser-79 by AMPK inactivates enzyme activity. The biotin cofactor is covalently attached to the central biotinyl-binding domain and is required for the catalytic activity.

The protein resides in the cytoplasm. Its subcellular location is the cytosol. It carries out the reaction hydrogencarbonate + acetyl-CoA + ATP = malonyl-CoA + ADP + phosphate + H(+). Its pathway is lipid metabolism; malonyl-CoA biosynthesis; malonyl-CoA from acetyl-CoA: step 1/1. Its activity is regulated as follows. Inhibited by phosphorylation. Citrate promotes oligomerization of the protein into filaments that correspond to the most active form of the carboxylase. Functionally, cytosolic enzyme that catalyzes the carboxylation of acetyl-CoA to malonyl-CoA, the first and rate-limiting step of de novo fatty acid biosynthesis. This is a 2 steps reaction starting with the ATP-dependent carboxylation of the biotin carried by the biotin carboxyl carrier (BCC) domain followed by the transfer of the carboxyl group from carboxylated biotin to acetyl-CoA. The sequence is that of Acetyl-CoA carboxylase 1 from Mus musculus (Mouse).